A 347-amino-acid chain; its full sequence is Aurora kinase A- and ninein-interacting protein (347 aa).

An interaction with AURKA region spans residues 182-347; sequence QREAKRKREG…DSEGNRVIRH (166 aa). The interaction with RBBP8/CtIP stretch occupies residues 273-347; sequence RDSWSQLFTE…DSEGNRVIRH (75 aa). Ser284 carries the phosphoserine modification. A compositionally biased stretch (polar residues) spans 301–322; that stretch reads VTNARNQGSGQFPDSPQAQGQD. The tract at residues 301 to 325 is disordered; it reads VTNARNQGSGQFPDSPQAQGQDGPT.

The protein belongs to the AUNIP family. Interacts (via C-terminus) with AURKA (via C-terminus). Interacts (via N-terminus) with NIN; this interaction blocks NIN phosphorylation by both AURKA and GSK3B. Identified in a complex with NIN and AURKA. Interacts with RBBP8/CtIP.

The protein resides in the nucleus. The protein localises to the chromosome. It is found in the cytoplasm. It localises to the cytoskeleton. Its subcellular location is the microtubule organizing center. The protein resides in the centrosome. The protein localises to the spindle pole. Functionally, DNA-binding protein that accumulates at DNA double-strand breaks (DSBs) following DNA damage and promotes DNA resection and homologous recombination. Serves as a sensor of DNA damage: binds DNA with a strong preference for DNA substrates that mimic structures generated at stalled replication forks, and anchors RBBP8/CtIP to DSB sites to promote DNA end resection and ensuing homologous recombination repair. Inhibits non-homologous end joining (NHEJ). Required for the dynamic movement of AURKA at the centrosomes and spindle apparatus during the cell cycle. The chain is Aurora kinase A- and ninein-interacting protein from Rattus norvegicus (Rat).